A 669-amino-acid chain; its full sequence is Protein real-time (669 aa).

Positions 3-175 (QKFQSPVRVY…FINQLEQEGV (173 aa)) constitute a PRELI/MSF1 domain. Positions 284–460 (EPAVVVEHFP…FLGGPCKTMI (177 aa)) constitute a CRAL-TRIO domain. A GOLD domain is found at 522-641 (HQNLYKSVDL…QLNLFYEVLS (120 aa)).

It is found in the mitochondrion. In Drosophila pseudoobscura pseudoobscura (Fruit fly), this protein is Protein real-time.